A 484-amino-acid polypeptide reads, in one-letter code: Cobyric acid synthase (484 aa).

Positions 251–438 (ALKVAVPVLS…LHGLFGSDAY (188 aa)) constitute a GATase cobBQ-type domain. Cys333 serves as the catalytic Nucleophile. Residue His430 is part of the active site.

The protein belongs to the CobB/CobQ family. CobQ subfamily.

It participates in cofactor biosynthesis; adenosylcobalamin biosynthesis. In terms of biological role, catalyzes amidations at positions B, D, E, and G on adenosylcobyrinic A,C-diamide. NH(2) groups are provided by glutamine, and one molecule of ATP is hydrogenolyzed for each amidation. This is Cobyric acid synthase from Sinorhizobium fredii (strain NBRC 101917 / NGR234).